We begin with the raw amino-acid sequence, 476 residues long: Sulfate adenylyltransferase subunit 1 (476 aa).

The region spanning Lys24 to Glu239 is the tr-type G domain. The interval Gly33 to Ser40 is G1. Gly33–Ser40 serves as a coordination point for GTP. Positions Gly91–Asp95 are G2. The interval Asp112–Gly115 is G3. GTP-binding positions include Asp112–His116 and Asn167–Asp170. Positions Asn167–Asp170 are G4. A G5 region spans residues Ser205–Leu207.

This sequence belongs to the TRAFAC class translation factor GTPase superfamily. Classic translation factor GTPase family. CysN/NodQ subfamily. In terms of assembly, heterodimer composed of CysD, the smaller subunit, and CysN.

It carries out the reaction sulfate + ATP + H(+) = adenosine 5'-phosphosulfate + diphosphate. The protein operates within sulfur metabolism; hydrogen sulfide biosynthesis; sulfite from sulfate: step 1/3. Its function is as follows. With CysD forms the ATP sulfurylase (ATPS) that catalyzes the adenylation of sulfate producing adenosine 5'-phosphosulfate (APS) and diphosphate, the first enzymatic step in sulfur assimilation pathway. APS synthesis involves the formation of a high-energy phosphoric-sulfuric acid anhydride bond driven by GTP hydrolysis by CysN coupled to ATP hydrolysis by CysD. The protein is Sulfate adenylyltransferase subunit 1 of Vibrio parahaemolyticus serotype O3:K6 (strain RIMD 2210633).